The following is a 96-amino-acid chain: ATP-dependent Clp protease adapter protein ClpS (96 aa).

It belongs to the ClpS family. In terms of assembly, binds to the N-terminal domain of the chaperone ClpA.

Its function is as follows. Involved in the modulation of the specificity of the ClpAP-mediated ATP-dependent protein degradation. This Campylobacter jejuni subsp. jejuni serotype O:2 (strain ATCC 700819 / NCTC 11168) protein is ATP-dependent Clp protease adapter protein ClpS.